The primary structure comprises 925 residues: Periplasmic nitrate reductase (925 aa).

A signal peptide (tat-type signal) is located at residues 1–30; it reads MDRREFIKSSAAAAACSAAGIAVPSSLSAA. One can recognise a 4Fe-4S Mo/W bis-MGD-type domain in the interval 36–92; sequence WRWDKSACRFCGTGCGIMVATKNGKIVAVKGDPLAPVNRGLNCIKGYFNAKIMYGED. Residues cysteine 43, cysteine 46, cysteine 50, and cysteine 78 each coordinate [4Fe-4S] cluster. Mo-bis(molybdopterin guanine dinucleotide) is bound by residues lysine 80, glutamine 148, asparagine 173, cysteine 177, 210–217, methionine 418, glutamine 422, asparagine 528, 553–554, lysine 576, aspartate 603, and 815–824; these read WGANMAEM, SD, and TGRVLEHWHS. Tryptophan 891 contacts substrate. Positions 899 and 916 each coordinate Mo-bis(molybdopterin guanine dinucleotide).

Belongs to the prokaryotic molybdopterin-containing oxidoreductase family. NasA/NapA/NarB subfamily. In terms of assembly, component of the periplasmic nitrate reductase NapAB complex composed of NapA and NapB. [4Fe-4S] cluster serves as cofactor. Requires Mo-bis(molybdopterin guanine dinucleotide) as cofactor. Predicted to be exported by the Tat system. The position of the signal peptide cleavage has not been experimentally proven.

It is found in the periplasm. It carries out the reaction 2 Fe(II)-[cytochrome] + nitrate + 2 H(+) = 2 Fe(III)-[cytochrome] + nitrite + H2O. Functionally, catalytic subunit of the periplasmic nitrate reductase complex NapAB. Receives electrons from NapB and catalyzes the reduction of nitrate to nitrite. This chain is Periplasmic nitrate reductase, found in Campylobacter fetus subsp. fetus (strain 82-40).